Consider the following 237-residue polypeptide: ATP-dependent dethiobiotin synthetase BioD (237 aa).

12–17 provides a ligand contact to ATP; the sequence is DAGKTL. Thr16 is a Mg(2+) binding site. Lys37 is an active-site residue. Ser41 provides a ligand contact to substrate. ATP contacts are provided by residues Asp54, 116-119, and 213-215; these read EGAG and PRL. Residues Asp54 and Glu116 each contribute to the Mg(2+) site.

It belongs to the dethiobiotin synthetase family. As to quaternary structure, homodimer. The cofactor is Mg(2+).

Its subcellular location is the cytoplasm. The catalysed reaction is (7R,8S)-7,8-diammoniononanoate + CO2 + ATP = (4R,5S)-dethiobiotin + ADP + phosphate + 3 H(+). Its pathway is cofactor biosynthesis; biotin biosynthesis; biotin from 7,8-diaminononanoate: step 1/2. Its function is as follows. Catalyzes a mechanistically unusual reaction, the ATP-dependent insertion of CO2 between the N7 and N8 nitrogen atoms of 7,8-diaminopelargonic acid (DAPA, also called 7,8-diammoniononanoate) to form a ureido ring. This chain is ATP-dependent dethiobiotin synthetase BioD, found in Chromohalobacter salexigens (strain ATCC BAA-138 / DSM 3043 / CIP 106854 / NCIMB 13768 / 1H11).